The chain runs to 477 residues: Endoglucanase A (477 aa).

The first 32 residues, 1-32 (MKNVKKRVGVVLLILAVLGVYMLAMPANTVSA), serve as a signal peptide directing secretion. Glu-95 functions as the Proton donor in the catalytic mechanism. The active-site Nucleophile is Asp-152. Residues 411-477 (PQVVYGDVNG…LIKSIPHLPY (67 aa)) enclose the Dockerin domain.

This sequence belongs to the glycosyl hydrolase 8 (cellulase D) family.

The enzyme catalyses Endohydrolysis of (1-&gt;4)-beta-D-glucosidic linkages in cellulose, lichenin and cereal beta-D-glucans.. Functionally, this enzyme catalyzes the endohydrolysis of 1,4-beta-glucosidic linkages in cellulose, lichenin and cereal beta-D-glucans. In Acetivibrio thermocellus (strain ATCC 27405 / DSM 1237 / JCM 9322 / NBRC 103400 / NCIMB 10682 / NRRL B-4536 / VPI 7372) (Clostridium thermocellum), this protein is Endoglucanase A (celA).